Reading from the N-terminus, the 144-residue chain is Maximins 7/H6 (144 aa).

The signal sequence occupies residues 1–18 (MNFKYIVAVSFLIASAYA). The propeptide occupies 19-43 (RSEENDEQSLSQRDILEEESLREIR). Asn70 bears the Asparagine amide mark. The propeptide occupies 74 to 123 (TAEDHEVMKRLEAVMRDLDSLDYPEEAAERETRGFNQEEIANLFTKKEKR). At Leu143 the chain carries Leucine amide.

Belongs to the bombinin family. In terms of tissue distribution, expressed by the skin glands.

The protein localises to the secreted. Maximin-7 shows antimicrobial activity against bacteria and against the fungus C.albicans. It has little hemolytic activity. Functionally, maximin-H6 shows antimicrobial activity against bacteria and against the fungus C.albicans. Shows strong hemolytic activity. This Bombina maxima (Giant fire-bellied toad) protein is Maximins 7/H6.